We begin with the raw amino-acid sequence, 235 residues long: Uridylate kinase (235 aa).

An ATP-binding site is contributed by 12–15; it reads KISG. Position 54 (Gly54) interacts with UMP. The ATP site is built by Gly55 and Arg59. UMP contacts are provided by residues Asp72 and 133–140; that span reads TGNPFFST. ATP-binding residues include Tyr166 and Asp169.

This sequence belongs to the UMP kinase family. Homohexamer.

The protein resides in the cytoplasm. It catalyses the reaction UMP + ATP = UDP + ADP. Its pathway is pyrimidine metabolism; CTP biosynthesis via de novo pathway; UDP from UMP (UMPK route): step 1/1. Its activity is regulated as follows. Inhibited by UTP. Its function is as follows. Catalyzes the reversible phosphorylation of UMP to UDP. This is Uridylate kinase from Acetivibrio thermocellus (strain ATCC 27405 / DSM 1237 / JCM 9322 / NBRC 103400 / NCIMB 10682 / NRRL B-4536 / VPI 7372) (Clostridium thermocellum).